Reading from the N-terminus, the 90-residue chain is Cuticle protein 9.5 (90 aa).

Its function is as follows. Component of the cuticle of migratory locust which contains more than 100 different structural proteins. This chain is Cuticle protein 9.5, found in Locusta migratoria (Migratory locust).